The sequence spans 353 residues: Hydrazine synthase subunit gamma (353 aa).

The N-terminal stretch at 1 to 39 is a signal peptide; sequence MAREMRLGGKERMKTGVVKIGLVAALGVVGLISAGGVYA. Residues C102, C105, and H106 each contribute to the heme c site. Residues D118, L119, E122, G123, S126, N129, L139, and P141 each coordinate Ca(2+). 4 residues coordinate heme c: C165, C225, C228, and H229. Positions 209–353 constitute a Cytochrome c domain; the sequence is EAQKRGQKIF…QDLVEYLKAL (145 aa). Ca(2+) is bound by residues D296, S306, G307, and T308. Residue H332 coordinates heme c.

Part of the hydrazine synthase complex that forms an elongated dimer of heterotrimers composed of one alpha, one beta and one gamma subunit. Requires heme c as cofactor.

Its subcellular location is the anammoxosome. The catalysed reaction is hydrazine + 3 Fe(III)-[cytochrome c] + H2O = nitric oxide + 3 Fe(II)-[cytochrome c] + NH4(+) + 2 H(+). It participates in nitrogen metabolism. Its function is as follows. Component of the hydrazine synthase complex that catalyzes the condensation of nitric oxide (NO) with ammonium to form hydrazine. The gamma subunit catalyzes the first half-reaction, i.e. the three-electron reduction of nitric oxide to hydroxylamine; it may obtain electrons from the triheme cytochrome c kuste2854. Is involved in anaerobic ammonium oxidation (anammox), a biological process in which nitrite is used as the electron acceptor in the conversion of ammonium to dinitrogen gas (N2) and water; this bacterial process has a major role in the Earth's nitrogen cycle and has been estimated to synthesize up to 50% of the dinitrogen gas emitted into our atmosphere from the oceans. The chain is Hydrazine synthase subunit gamma from Kuenenia stuttgartiensis.